The following is a 134-amino-acid chain: Arsenate reductase (134 aa).

Catalysis depends on nucleophile residues cysteine 11, cysteine 83, and cysteine 90. Intrachain disulfides connect cysteine 11-cysteine 83 and cysteine 83-cysteine 90.

This sequence belongs to the low molecular weight phosphotyrosine protein phosphatase family. Thioredoxin-coupled ArsC subfamily.

It localises to the cytoplasm. The enzyme catalyses arsenate + [thioredoxin]-dithiol + H(+) = arsenite + [thioredoxin]-disulfide + H2O. In terms of biological role, catalyzes the reduction of arsenate [As(V)] to arsenite [As(III)]. In Bacillus cereus (strain Q1), this protein is Arsenate reductase.